The primary structure comprises 411 residues: [Pyruvate dehydrogenase (acetyl-transferring)] kinase isozyme 4, mitochondrial (411 aa).

One can recognise a Histidine kinase domain in the interval Ile-138 to Ser-368. ATP is bound by residues Glu-254–Arg-261, Asp-293, Ser-312–Thr-313, and Gly-329–Leu-334.

It belongs to the PDK/BCKDK protein kinase family. Homodimer. Interacts with the pyruvate dehydrogenase complex subunit DLAT, and is part of the multimeric pyruvate dehydrogenase complex that contains multiple copies of pyruvate dehydrogenase (E1), dihydrolipoamide acetyltransferase (DLAT, E2) and lipoamide dehydrogenase (DLD, E3). As to expression, ubiquitous; highest levels of expression in heart and skeletal muscle.

The protein localises to the mitochondrion matrix. It carries out the reaction L-seryl-[pyruvate dehydrogenase E1 alpha subunit] + ATP = O-phospho-L-seryl-[pyruvate dehydrogenase E1 alpha subunit] + ADP + H(+). Kinase that plays a key role in regulation of glucose and fatty acid metabolism and homeostasis via phosphorylation of the pyruvate dehydrogenase subunits PDHA1 and PDHA2. This inhibits pyruvate dehydrogenase activity, and thereby regulates metabolite flux through the tricarboxylic acid cycle, down-regulates aerobic respiration and inhibits the formation of acetyl-coenzyme A from pyruvate. Inhibition of pyruvate dehydrogenase decreases glucose utilization and increases fat metabolism in response to prolonged fasting and starvation. Plays an important role in maintaining normal blood glucose levels under starvation, and is involved in the insulin signaling cascade. Via its regulation of pyruvate dehydrogenase activity, plays an important role in maintaining normal blood pH and in preventing the accumulation of ketone bodies under starvation. In the fed state, mediates cellular responses to glucose levels and to a high-fat diet. Regulates both fatty acid oxidation and de novo fatty acid biosynthesis. Plays a role in the generation of reactive oxygen species. Protects detached epithelial cells against anoikis. Plays a role in cell proliferation via its role in regulating carbohydrate and fatty acid metabolism. This is [Pyruvate dehydrogenase (acetyl-transferring)] kinase isozyme 4, mitochondrial (PDK4) from Homo sapiens (Human).